The chain runs to 206 residues: Large ribosomal subunit protein bL25 (206 aa).

Residues 168–206 (DPEESVVTVEVPEDASESTAAPEAAAPAADAAAPAADAK) form a disordered region. The span at 184–206 (ESTAAPEAAAPAADAAAPAADAK) shows a compositional bias: low complexity.

Belongs to the bacterial ribosomal protein bL25 family. CTC subfamily. Part of the 50S ribosomal subunit; part of the 5S rRNA/L5/L18/L25 subcomplex. Contacts the 5S rRNA. Binds to the 5S rRNA independently of L5 and L18.

In terms of biological role, this is one of the proteins that binds to the 5S RNA in the ribosome where it forms part of the central protuberance. This chain is Large ribosomal subunit protein bL25, found in Bifidobacterium longum (strain DJO10A).